The following is a 241-amino-acid chain: Orotidine 5'-phosphate decarboxylase (241 aa).

Substrate contacts are provided by residues aspartate 18, lysine 39, 66–75, threonine 130, arginine 192, glutamine 201, glycine 221, and arginine 222; that span reads DLKFHDIPAT. The active-site Proton donor is the lysine 68.

Belongs to the OMP decarboxylase family. Type 1 subfamily. In terms of assembly, homodimer.

The catalysed reaction is orotidine 5'-phosphate + H(+) = UMP + CO2. Its pathway is pyrimidine metabolism; UMP biosynthesis via de novo pathway; UMP from orotate: step 2/2. Its function is as follows. Catalyzes the decarboxylation of orotidine 5'-monophosphate (OMP) to uridine 5'-monophosphate (UMP). This Synechococcus sp. (strain CC9605) protein is Orotidine 5'-phosphate decarboxylase.